The chain runs to 88 residues: Small ribosomal subunit protein bS20 (88 aa).

The interval methionine 1–arginine 25 is disordered. Over residues arginine 12 to lysine 22 the composition is skewed to basic and acidic residues.

It belongs to the bacterial ribosomal protein bS20 family.

Functionally, binds directly to 16S ribosomal RNA. The protein is Small ribosomal subunit protein bS20 of Dinoroseobacter shibae (strain DSM 16493 / NCIMB 14021 / DFL 12).